The sequence spans 100 residues: Large ribosomal subunit protein eL36B (100 aa).

This sequence belongs to the eukaryotic ribosomal protein eL36 family. In terms of assembly, component of the large ribosomal subunit (LSU). Mature yeast ribosomes consist of a small (40S) and a large (60S) subunit. The 40S small subunit contains 1 molecule of ribosomal RNA (18S rRNA) and 33 different proteins (encoded by 57 genes). The large 60S subunit contains 3 rRNA molecules (25S, 5.8S and 5S rRNA) and 46 different proteins (encoded by 81 genes).

The protein localises to the cytoplasm. In terms of biological role, component of the ribosome, a large ribonucleoprotein complex responsible for the synthesis of proteins in the cell. The small ribosomal subunit (SSU) binds messenger RNAs (mRNAs) and translates the encoded message by selecting cognate aminoacyl-transfer RNA (tRNA) molecules. The large subunit (LSU) contains the ribosomal catalytic site termed the peptidyl transferase center (PTC), which catalyzes the formation of peptide bonds, thereby polymerizing the amino acids delivered by tRNAs into a polypeptide chain. The nascent polypeptides leave the ribosome through a tunnel in the LSU and interact with protein factors that function in enzymatic processing, targeting, and the membrane insertion of nascent chains at the exit of the ribosomal tunnel. The polypeptide is Large ribosomal subunit protein eL36B (Saccharomyces cerevisiae (strain ATCC 204508 / S288c) (Baker's yeast)).